The following is a 493-amino-acid chain: Glutamate--tRNA ligase (493 aa).

Positions 10–20 (PSPTGDPHVGT) match the 'HIGH' region motif. Residues 251–255 (KLSKR) carry the 'KMSKS' region motif. Lys-254 contacts ATP.

Belongs to the class-I aminoacyl-tRNA synthetase family. Glutamate--tRNA ligase type 1 subfamily. As to quaternary structure, monomer.

Its subcellular location is the cytoplasm. The enzyme catalyses tRNA(Glu) + L-glutamate + ATP = L-glutamyl-tRNA(Glu) + AMP + diphosphate. In terms of biological role, catalyzes the attachment of glutamate to tRNA(Glu) in a two-step reaction: glutamate is first activated by ATP to form Glu-AMP and then transferred to the acceptor end of tRNA(Glu). The sequence is that of Glutamate--tRNA ligase from Pseudomonas putida (strain ATCC 700007 / DSM 6899 / JCM 31910 / BCRC 17059 / LMG 24140 / F1).